The chain runs to 1117 residues: WD repeat and HMG-box DNA-binding protein 1 (1117 aa).

7 WD repeats span residues 11 to 50 (GHTEGHTEVCFDDSGSYIVTCGSDGDVRMWEDLDDDDPKS), 52 to 91 (NVGEKAFSCALKNGKLVTAVSNNTVQVYTFPEGVPDGILT), 93 to 131 (FTTNANHVVFNGAGNKIAAGSSDFLVKVVDVMDNSQQQT), 134 to 173 (GHDAPVLSLSFDPKDIFLASASCDGTVRVWNISDQTCAVS), 184 to 223 (VNAKSICRLAWQPKAGKLLAVPVEKSVKLYRRETWSNPFD), 228 to 267 (SISQTLNIVTWSPCGQYLAAGAINGLIVVWNVETKDCMER), and 271 to 310 (EKGYAICGLAWHPTCSRICYTDVEGNLGVLENVCDLSGKV). Phosphoserine is present on residues Ser-333 and Ser-377. Lys-390 is covalently cross-linked (Glycyl lysine isopeptide (Lys-Gly) (interchain with G-Cter in SUMO2)). Position 664 is an N6-acetyllysine (Lys-664). The disordered stretch occupies residues 816–885 (LAETQSEEEK…NLFQSANSSD (70 aa)). At Thr-819 the chain carries Phosphothreonine. The residue at position 821 (Ser-821) is a Phosphoserine. Residues 861–872 (DTVSEEKPESHN) show a composition bias toward basic and acidic residues. Polar residues predominate over residues 873 to 885 (HGQNLFQSANSSD). Ser-910 and Ser-923 each carry phosphoserine. Residues 911–1005 (SKEPAVSANS…AVCLQNSENQ (95 aa)) form a disordered region. Polar residues predominate over residues 917–943 (SANSTRSANILDSMNKSSRKSTSLNRM). Lys-953 bears the N6-acetyllysine mark. The span at 962 to 974 (KQASAASYFQKRT) shows a compositional bias: polar residues. Over residues 975–987 (PQADKTEEVKENP) the composition is skewed to basic and acidic residues. Positions 988–1004 (KSSSSDAPAVCLQNSEN) are enriched in polar residues. The HMG box DNA-binding region spans 1004 to 1073 (NQRPKTGFQM…SDGAEAKKRK (70 aa)). Ser-1030 carries the phosphoserine modification. Residues 1054-1074 (WTNKAKGETASDGAEAKKRKR) are disordered. Residue Lys-1116 forms a Glycyl lysine isopeptide (Lys-Gly) (interchain with G-Cter in SUMO1); alternate linkage. A Glycyl lysine isopeptide (Lys-Gly) (interchain with G-Cter in SUMO2); alternate cross-link involves residue Lys-1116.

As to quaternary structure, trimer. Interacts with the polymerase alpha catalytic subunit POLA1. Interacts with MCM10. Interacts with DNA2. Interacts with CDC45 and GINS2 subunit of GINS complex; these interactions associate WDHD1 with the CMG helicase complex.

It is found in the nucleus. The protein localises to the nucleoplasm. Core replisome component that acts as a replication initiation factor. Binds directly to the CMG complex and functions as a hub to recruit additional proteins to the replication fork. The chain is WD repeat and HMG-box DNA-binding protein 1 (Wdhd1) from Mus musculus (Mouse).